A 93-amino-acid chain; its full sequence is Large ribosomal subunit protein bL31 (93 aa).

Residues 72-93 (VKTVSSNADNQKETTEELIKNK) are disordered. The segment covering 81 to 93 (NQKETTEELIKNK) has biased composition (basic and acidic residues).

The protein belongs to the bacterial ribosomal protein bL31 family. Type A subfamily. Part of the 50S ribosomal subunit.

Functionally, binds the 23S rRNA. The sequence is that of Large ribosomal subunit protein bL31 from Onion yellows phytoplasma (strain OY-M).